The chain runs to 433 residues: Glutamate-1-semialdehyde 2,1-aminomutase (433 aa).

The residue at position 273 (K273) is an N6-(pyridoxal phosphate)lysine.

This sequence belongs to the class-III pyridoxal-phosphate-dependent aminotransferase family. HemL subfamily. As to quaternary structure, homodimer. Requires pyridoxal 5'-phosphate as cofactor.

The protein resides in the cytoplasm. The catalysed reaction is (S)-4-amino-5-oxopentanoate = 5-aminolevulinate. It participates in porphyrin-containing compound metabolism; protoporphyrin-IX biosynthesis; 5-aminolevulinate from L-glutamyl-tRNA(Glu): step 2/2. The polypeptide is Glutamate-1-semialdehyde 2,1-aminomutase (Ralstonia pickettii (strain 12J)).